A 305-amino-acid polypeptide reads, in one-letter code: Serine/threonine-protein phosphatase PP2A catalytic subunit (305 aa).

Residues Asp53, His55, Asp81, and Asn113 each coordinate Mn(2+). The Proton donor role is filled by His114. The Mn(2+) site is built by His163 and His237.

The protein belongs to the PPP phosphatase family. PP-2A subfamily. It depends on Mn(2+) as a cofactor.

It catalyses the reaction O-phospho-L-seryl-[protein] + H2O = L-seryl-[protein] + phosphate. The catalysed reaction is O-phospho-L-threonyl-[protein] + H2O = L-threonyl-[protein] + phosphate. The protein is Serine/threonine-protein phosphatase PP2A catalytic subunit of Helianthus annuus (Common sunflower).